A 74-amino-acid chain; its full sequence is Fulgimotoxin (74 aa).

Glutamine 1 is modified (pyrrolidone carboxylic acid). Intrachain disulfides connect cysteine 10-cysteine 34, cysteine 13-cysteine 21, cysteine 27-cysteine 51, cysteine 55-cysteine 66, and cysteine 67-cysteine 72.

Belongs to the three-finger toxin family. Ancestral subfamily. Boigatoxin sub-subfamily. Monomer. The N-terminus is blocked. Post-translationally, contains 5 disulfide bonds. Expressed by the venom gland.

It localises to the secreted. Functionally, reptile-specific three-finger toxin that is lethal at low doses for lizards, but not for mice. Probably acts as a neurotoxin. This is Fulgimotoxin from Oxybelis fulgidus (Green vine snake).